Reading from the N-terminus, the 28-residue chain is EYCGESCYLIPCFTPGCYCVSRQCVNKN.

Positions 1–28 (EYCGESCYLIPCFTPGCYCVSRQCVNKN) form a cross-link, cyclopeptide (Glu-Asn). 3 disulfide bridges follow: Cys3–Cys17, Cys7–Cys19, and Cys12–Cys24.

In terms of processing, this is a cyclic peptide. As to expression, expressed in fruit, pedicel, leaf and stem but not in root (at protein level).

Its function is as follows. Probably participates in a plant defense mechanism. The chain is Chassatide C12 from Chassalia chartacea (Chassalia curviflora).